A 159-amino-acid polypeptide reads, in one-letter code: NADH-quinone oxidoreductase subunit B (159 aa).

The [4Fe-4S] cluster site is built by cysteine 37, cysteine 38, cysteine 102, and cysteine 132.

The protein belongs to the complex I 20 kDa subunit family. As to quaternary structure, NDH-1 is composed of 14 different subunits. Subunits NuoB, C, D, E, F, and G constitute the peripheral sector of the complex. [4Fe-4S] cluster serves as cofactor.

Its subcellular location is the cell inner membrane. The catalysed reaction is a quinone + NADH + 5 H(+)(in) = a quinol + NAD(+) + 4 H(+)(out). Its function is as follows. NDH-1 shuttles electrons from NADH, via FMN and iron-sulfur (Fe-S) centers, to quinones in the respiratory chain. Couples the redox reaction to proton translocation (for every two electrons transferred, four hydrogen ions are translocated across the cytoplasmic membrane), and thus conserves the redox energy in a proton gradient. This is NADH-quinone oxidoreductase subunit B from Vesicomyosocius okutanii subsp. Calyptogena okutanii (strain HA).